Reading from the N-terminus, the 183-residue chain is Neuronal synaptobrevin (183 aa).

Residues M1–P17 show a composition bias toward low complexity. Residues M1 to N32 form a disordered region. Over M1–M106 the chain is Cytoplasmic. A compositionally biased stretch (gly residues) spans A18 to V27. One can recognise a v-SNARE coiled-coil homology domain in the interval R41–Q101. A helical transmembrane segment spans residues I107–I127. Over G128–V183 the chain is Vesicular. The disordered stretch occupies residues Y135–V183. Positions Y141–Q151 are enriched in pro residues. Over residues A165–V183 the composition is skewed to gly residues.

This sequence belongs to the synaptobrevin family. In terms of assembly, part of the SNARE core complex containing Snap25 and syntaxin. Specifically expressed in neurons and synapses.

The protein localises to the cytoplasmic vesicle. It is found in the secretory vesicle. The protein resides in the synaptic vesicle membrane. Its subcellular location is the early endosome membrane. Functionally, involved in the targeting and/or fusion of transport vesicles to their target membrane. Major SNARE protein of synaptic vesicles which mediates fusion of synaptic vesicles to release neurotransmitters. Essential for fast vesicular exocytosis and activity-dependent neurotransmitter release as well as fast endocytosis that mediates rapid reuse of synaptic vesicles. Also involved in a neuron-specific sort-and-degrade mechanism that promotes endolysosomal degradation and is required for neuronal maintenance. The chain is Neuronal synaptobrevin from Drosophila melanogaster (Fruit fly).